The sequence spans 1039 residues: Kinesin-like protein KIN-5B (1039 aa).

Residues Asn48–Ile390 form the Kinesin motor domain. Gly134–Thr141 contacts ATP. Residues Thr1008–Lys1039 form a disordered region. Residues Ser1010–Ser1020 show a composition bias toward basic and acidic residues.

This sequence belongs to the TRAFAC class myosin-kinesin ATPase superfamily. Kinesin family. KIN-5/BimC subfamily.

The protein localises to the cytoplasm. It localises to the cytoskeleton. Its subcellular location is the spindle. Functionally, responsible for microtubule translocation. May be important for the organization of phragmoplast-specific arrays of microtubules. Plays an essential role in stabilizing the mitotic spindle. Required during mitotic cytokinesis. The protein is Kinesin-like protein KIN-5B of Arabidopsis thaliana (Mouse-ear cress).